Consider the following 471-residue polypeptide: MPNSEPASLLELFNSIATQGELVRSLKAGNASKDEIDSAVKMLVSLKMSYKAAAGEDYKADCPPGNPAPTSNHGPDATEAEEDFVDPWTVQTSSAKGIDYDKLIVRFGSSKIDKELINRIERATGQRPHHFLRRGIFFSHRDMNQVLDAYENKKPFYLYTGRGPSSEAMHVGHLIPFIFTKWLQDVFNVPLVIQMTDDEKYLWKDLTLDQAYSYAVENAKDIIACGFDINKTFIFSDLDYMGMSSGFYKNVVKIQKHVTFNQVKGIFGFTDSDCIGKISFPAIQAAPSFSNSFPQIFRDRTDIQCLIPCAIDQDPYFRMTRDVAPRIGYPKPALLHSTFFPALQGAQTKMSASDPNSSIFLTDTAKQIKTKVNKHAFSGGRDTIEEHRQFGGNCDVDVSFMYLTFFLEDDDKLEQIRKDYTSGAMLTGELKKALIEVLQPLIAEHQARRKEVTDEIVKEFMTPRKLSFDFQ.

Residues 8 to 64 (SLLELFNSIATQGELVRSLKAGNASKDEIDSAVKMLVSLKMSYKAAAGEDYKADCPP) enclose the WHEP-TRS domain. Residues 59-79 (KADCPPGNPAPTSNHGPDATE) are disordered. Residue K154 is modified to N6-succinyllysine. The 'HIGH' region signature appears at 164–173 (PSSEAMHVGH). The short motif at 349-353 (KMSAS) is the 'KMSKS' region element. S351 carries the post-translational modification Phosphoserine.

Belongs to the class-I aminoacyl-tRNA synthetase family. Homodimer. Interacts with an oxidized form of GAPDH. GAPDH stimulates the aminoacylation activity of isoform 2. In terms of processing, proteolytic cleavage generates 2 forms; T1-TrpRS and T2-TrpRS.

The protein localises to the cytoplasm. It carries out the reaction tRNA(Trp) + L-tryptophan + ATP = L-tryptophyl-tRNA(Trp) + AMP + diphosphate + H(+). Functionally, catalyzes the attachment of tryptophan to tRNA(Trp) in a two-step reaction: tryptophan is first activated by ATP to form Trp-AMP and then transferred to the acceptor end of the tRNA(Trp). Its function is as follows. Has no angiostatic activity. In terms of biological role, possesses an angiostatic activity but has no aminoacylation activity. Inhibits fluid shear stress-activated responses of endothelial cells. Regulates ERK, Akt, and eNOS activation pathways that are associated with angiogenesis, cytoskeletal reorganization and shear stress-responsive gene expression. Has an angiostatic activity. This is Tryptophan--tRNA ligase, cytoplasmic from Homo sapiens (Human).